Reading from the N-terminus, the 1549-residue chain is Structural maintenance of chromosomes protein 4 (1549 aa).

Residues 1–78 form a disordered region; sequence MPPKTSAAPP…LFSLQLPSRP (78 aa). Residues 26-36 are compositionally biased toward basic residues; that stretch reads KPQKKTTKPVN. Positions 37 to 59 are enriched in basic and acidic residues; it reads RHKEGSKDPEEELQRAVNEKFDG. 121–128 contacts ATP; sequence GPNGSGKS. A coiled-coil region spans residues 326–604; the sequence is MKLEQRRRQR…QNSSCSSSNK (279 aa). Composition is skewed to basic and acidic residues over residues 396-407 and 420-444; these read LSDLGTEETRRK and AEAE…AERK. Disordered stretches follow at residues 396 to 444 and 460 to 485; these read LSDL…AERK and KTAN…EEQK. In terms of domain architecture, SMC hinge spans 619-734; it reads KSFHGRLGDL…GDSTQEAQRM (116 aa). Coiled-coil stretches lie at residues 786–1058 and 1144–1182; these read KAAE…KVNR and EKIN…SIKA. Polar residues predominate over residues 1440–1459; sequence IQTTRDVTSRPQSKATTSGD. A disordered region spans residues 1440-1549; that stretch reads IQTTRDVTSR…AIVDDDDDME (110 aa). Residues 1460–1474 are compositionally biased toward basic and acidic residues; that stretch reads GTERPASRSASRPES. Residues 1510–1523 show a composition bias toward polar residues; it reads TPPSKRSNSASTPK.

This sequence belongs to the SMC family. SMC4 subfamily. Component of the condensin I complex, which contains the mix-1/SMC2 and smc-4/SMC4 heterodimer, and three non SMC subunits that probably regulate the complex: dpy-26, capg-1 and dpy-28. Within the complex, interacts with mix-1, dpy-26, capg-1 and dpy-28. Component of the condensin II complex, which contains the mix-1/SMC2 and smc-4/SMC4 heterodimer, and three non SMC subunits, kle-2, capg-2 and hcp-6 that probably regulate the complex. Within the complex, interacts with mix-1, kle-2, capg-2 and hcp-6. Interacts with smcl-1.

The protein localises to the nucleus. The protein resides in the chromosome. Its function is as follows. Central component of the condensin I complex, a complex required for conversion of interphase chromatin into mitotic-like condense chromosomes. The condensin I complex introduces positive supercoils into relaxed DNA in the presence of type I topoisomerases. Converts nicked DNA into positive knotted forms in the presence of type II topoisomerases. Also a central component of the condensin II complex, a complex that seems to play a role in prophase chromosome condensation. Both the condensin complex I and II play a role in meiotic and mitotic chromosome segregation. Plays a role in robust cytokinesis upon the presence of chromatin obstructions. The chain is Structural maintenance of chromosomes protein 4 (smc-4) from Caenorhabditis elegans.